The chain runs to 366 residues: Ferrochelatase (366 aa).

Fe cation is bound by residues His209 and Glu290.

It belongs to the ferrochelatase family.

It localises to the cytoplasm. It carries out the reaction heme b + 2 H(+) = protoporphyrin IX + Fe(2+). Its pathway is porphyrin-containing compound metabolism; protoheme biosynthesis; protoheme from protoporphyrin-IX: step 1/1. In terms of biological role, catalyzes the ferrous insertion into protoporphyrin IX. This chain is Ferrochelatase, found in Teredinibacter turnerae (strain ATCC 39867 / T7901).